The following is a 157-amino-acid chain: MKVELCSFSGYKIYPGHGRRYARIDGKVFQFLNAKCESAFLAKRNPRQINWTVLYRRKHKKGQSEEVAKKRTRRAVKFQRAITGASLAEIMAKRNQKPEVRKAQREQAIRAAKEAKKAKQAAKKPAAPSAKASTKTAQKPKIAKPMKISAPRVGGKR.

A disordered region spans residues 94–157; it reads RNQKPEVRKA…ISAPRVGGKR (64 aa). Over residues 96 to 117 the composition is skewed to basic and acidic residues; sequence QKPEVRKAQREQAIRAAKEAKK. Low complexity predominate over residues 123–140; it reads KKPAAPSAKASTKTAQKP.

This sequence belongs to the eukaryotic ribosomal protein eL24 family. In terms of assembly, component of the large ribosomal subunit.

The protein resides in the cytoplasm. Its function is as follows. Component of the large ribosomal subunit. The ribosome is a large ribonucleoprotein complex responsible for the synthesis of proteins in the cell. In Pagrus major (Red sea bream), this protein is Large ribosomal subunit protein eL24 (rpl24).